The sequence spans 363 residues: MKTLSILVMAGGTGGHVFPALAVAEELRARGALVEWLGTAKGIENTLVPKANIPLNLISVEGVRGRGLTGLLKAPFLITKAVFQAISIIRKMNADLVLGFGGFASGPGGVAARLLGKPLVIHEQNAVAGTTNRLLARIAQRVLAAFDGAFHNTSTRVVKVVGNPVRPSIYQLPPVAERYQARAQEHPHLLVLGGSLGAKAINELLPMALAQLNEGQRPEVWHQTGKAHGESTAALYLQQQVNARVEPFIEDMAAAYAWADLVICRAGALTVSELMAAGVASALIPLPTAIDDHQTRNAHILASANAGVALVQQTLTAADLAALLSTTLADRPALMAMAQRAQHLAHPNAAATVANVCVEVAHG.

Residues 13–15 (TGG), Asn-125, Arg-166, Ser-195, Ile-249, 268–273 (ALTVSE), and Gln-294 contribute to the UDP-N-acetyl-alpha-D-glucosamine site.

The protein belongs to the glycosyltransferase 28 family. MurG subfamily.

The protein resides in the cell inner membrane. It catalyses the reaction di-trans,octa-cis-undecaprenyl diphospho-N-acetyl-alpha-D-muramoyl-L-alanyl-D-glutamyl-meso-2,6-diaminopimeloyl-D-alanyl-D-alanine + UDP-N-acetyl-alpha-D-glucosamine = di-trans,octa-cis-undecaprenyl diphospho-[N-acetyl-alpha-D-glucosaminyl-(1-&gt;4)]-N-acetyl-alpha-D-muramoyl-L-alanyl-D-glutamyl-meso-2,6-diaminopimeloyl-D-alanyl-D-alanine + UDP + H(+). Its pathway is cell wall biogenesis; peptidoglycan biosynthesis. Functionally, cell wall formation. Catalyzes the transfer of a GlcNAc subunit on undecaprenyl-pyrophosphoryl-MurNAc-pentapeptide (lipid intermediate I) to form undecaprenyl-pyrophosphoryl-MurNAc-(pentapeptide)GlcNAc (lipid intermediate II). This chain is UDP-N-acetylglucosamine--N-acetylmuramyl-(pentapeptide) pyrophosphoryl-undecaprenol N-acetylglucosamine transferase, found in Cellvibrio japonicus (strain Ueda107) (Pseudomonas fluorescens subsp. cellulosa).